A 336-amino-acid chain; its full sequence is Heme A synthase (336 aa).

A run of 5 helical transmembrane segments spans residues 5–25 (LTRW…VGGI), 92–112 (GRAT…KGII), 117–137 (ILSY…GWYM), 153–173 (LAFH…KLVK), and 191–211 (LIFS…GALV). Histidine 255 serves as a coordination point for heme. Transmembrane regions (helical) follow at residues 257–277 (LGAY…LKVK), 284–304 (VAFY…ITLL), and 307–327 (VPII…SVVI). Histidine 315 contributes to the heme binding site.

Belongs to the COX15/CtaA family. Type 2 subfamily. As to quaternary structure, interacts with CtaB. The cofactor is heme b.

The protein resides in the cell membrane. It catalyses the reaction Fe(II)-heme o + 2 A + H2O = Fe(II)-heme a + 2 AH2. It participates in porphyrin-containing compound metabolism; heme A biosynthesis; heme A from heme O: step 1/1. Functionally, catalyzes the conversion of heme O to heme A by two successive hydroxylations of the methyl group at C8. The first hydroxylation forms heme I, the second hydroxylation results in an unstable dihydroxymethyl group, which spontaneously dehydrates, resulting in the formyl group of heme A. The protein is Heme A synthase of Rickettsia bellii (strain OSU 85-389).